We begin with the raw amino-acid sequence, 372 residues long: uncharacterized protein (372 aa).

Composition is skewed to basic residues over residues 1–11 (MNKILGLRRAK) and 38–48 (RLRRGMQRLSR). A disordered region spans residues 1 to 127 (MNKILGLRRA…NSGTRDTPCW (127 aa)). Positions 50–61 (GYGDNRRSRGSE) are enriched in basic and acidic residues. Residues 93 to 104 (GKTSPCGSSGTP) are compositionally biased toward polar residues.

This is an uncharacterized protein from Psittacid herpesvirus 1 (isolate Amazon parrot/-/97-0001/1997) (PsHV-1).